Here is a 296-residue protein sequence, read N- to C-terminus: uncharacterized protein (296 aa).

Helical transmembrane passes span 8-28, 34-54, 63-83, 89-109, 121-141, 147-167, 183-203, 208-228, 238-258, and 261-281; these read LFVLIAAFFWGTTGTVQALAP, LAFGAFRLLIGGSAMLLAVWI, WAWPLVFLAAVCMACYQPLFF, TGIAVGTVIAIGSAPIIAGTL, SWWIATVLALAGCWLLFSDSS, VAGVLMALGAGASFAGYTLIS, VFMISAILLTPLLWQLDISWI, GLGTSLYIGLIATCAAYFLFA, AAVTLSLAEPLTASLLGVFFI, and MLSPSSWLGIALMMLGLLVIS. EamA domains are found at residues 15–138 and 158–282; these read FFWG…LLFS and ASFA…VISA.

Belongs to the EamA transporter family.

Its subcellular location is the cell membrane. This is an uncharacterized protein from Bacillus subtilis (strain 168).